The following is a 341-amino-acid chain: Basic membrane protein D (341 aa).

The first 16 residues, Met-1–Ala-16, serve as a signal peptide directing secretion. A lipid anchor (N-palmitoyl cysteine) is attached at Cys-17. The S-diacylglycerol cysteine moiety is linked to residue Cys-17.

The protein belongs to the BMP lipoprotein family. As to quaternary structure, monomer.

It is found in the cell inner membrane. Its function is as follows. Binds adenosine and inosine. May be part of an ABC-type nucleoside uptake system involved in the purine salvage pathway. This chain is Basic membrane protein D, found in Borreliella burgdorferi (strain JD1) (Borrelia burgdorferi).